Here is a 1378-residue protein sequence, read N- to C-terminus: Disease resistance protein RRS1 (1378 aa).

One can recognise a TIR domain in the interval Glu5–His146. The NB-ARC domain maps to Ile170 to His421. ATP is bound at residue Gly179–Thr186. 9 LRR repeats span residues Ser498–Asn522, Asn535–Pro553, Asn554–Pro575, His577–Leu598, Ala621–Arg646, Pro665–Pro688, Leu742–Gly766, Pro768–Ile793, and Pro831–Leu854. Residues Arg988–Asp1005 carry the Nuclear localization signal motif. A DNA-binding region (WRKY) is located at residues Ile1204–Pro1272. The segment at Arg1300 to Arg1321 is disordered.

Interacts with PopP2, a R.solanacearum type III effector.

The protein localises to the nucleus. It localises to the cytoplasm. Functionally, transcription factor. Interacts specifically with the W box (5'-(T)TGAC[CT]-3'), a frequently occurring elicitor-responsive cis-acting element. Also acts as a disease resistance protein involved in resistance to fungal and bacterial pathogens, including R.solanacearum, P.syringae pv. tomato and C.higginsianum. RRS1 mediated resistance depends on salicylic acid and NDR1 (AC O48915). This chain is Disease resistance protein RRS1, found in Arabidopsis thaliana (Mouse-ear cress).